Here is a 372-residue protein sequence, read N- to C-terminus: tRNA-specific 2-thiouridylase MnmA 1 (372 aa).

ATP-binding positions include 26–33 (AISGGVDS) and methionine 52. The Nucleophile role is filled by cysteine 118. A disulfide bridge connects residues cysteine 118 and cysteine 214. Glycine 142 provides a ligand contact to ATP. Residues 164 to 166 (KDQ) form an interaction with tRNA region. The active-site Cysteine persulfide intermediate is cysteine 214.

Belongs to the MnmA/TRMU family.

Its subcellular location is the cytoplasm. The enzyme catalyses S-sulfanyl-L-cysteinyl-[protein] + uridine(34) in tRNA + AH2 + ATP = 2-thiouridine(34) in tRNA + L-cysteinyl-[protein] + A + AMP + diphosphate + H(+). In terms of biological role, catalyzes the 2-thiolation of uridine at the wobble position (U34) of tRNA, leading to the formation of s(2)U34. The chain is tRNA-specific 2-thiouridylase MnmA 1 from Syntrophus aciditrophicus (strain SB).